Reading from the N-terminus, the 317-residue chain is Ribosomal RNA small subunit methyltransferase H (317 aa).

Residues Gly30–His32, Asp50, Tyr74, Asp95, and Gln102 contribute to the S-adenosyl-L-methionine site.

It belongs to the methyltransferase superfamily. RsmH family.

The protein resides in the cytoplasm. It carries out the reaction cytidine(1402) in 16S rRNA + S-adenosyl-L-methionine = N(4)-methylcytidine(1402) in 16S rRNA + S-adenosyl-L-homocysteine + H(+). Specifically methylates the N4 position of cytidine in position 1402 (C1402) of 16S rRNA. The polypeptide is Ribosomal RNA small subunit methyltransferase H (Nitrosomonas europaea (strain ATCC 19718 / CIP 103999 / KCTC 2705 / NBRC 14298)).